Here is a 275-residue protein sequence, read N- to C-terminus: Shikimate dehydrogenase (NADP(+)) (275 aa).

Shikimate contacts are provided by residues 19–21 and threonine 66; that span reads SKS. Lysine 70 functions as the Proton acceptor in the catalytic mechanism. Glutamate 82 is an NADP(+) binding site. Residues asparagine 91 and aspartate 106 each contribute to the shikimate site. NADP(+)-binding positions include 130-134, 154-159, and methionine 217; these read GAGGA and NRTASK. Residue tyrosine 219 participates in shikimate binding. Glycine 241 lines the NADP(+) pocket.

The protein belongs to the shikimate dehydrogenase family. In terms of assembly, homodimer.

It catalyses the reaction shikimate + NADP(+) = 3-dehydroshikimate + NADPH + H(+). It participates in metabolic intermediate biosynthesis; chorismate biosynthesis; chorismate from D-erythrose 4-phosphate and phosphoenolpyruvate: step 4/7. In terms of biological role, involved in the biosynthesis of the chorismate, which leads to the biosynthesis of aromatic amino acids. Catalyzes the reversible NADPH linked reduction of 3-dehydroshikimate (DHSA) to yield shikimate (SA). The chain is Shikimate dehydrogenase (NADP(+)) from Colwellia psychrerythraea (strain 34H / ATCC BAA-681) (Vibrio psychroerythus).